The primary structure comprises 82 residues: Short neurotoxin OKI-10 (82 aa).

An N-terminal signal peptide occupies residues 1 to 20; sequence KTLLLTLVVVTIVCLDLGYT. Cystine bridges form between C23–C44, C37–C61, C63–C74, and C75–C80.

It belongs to the three-finger toxin family. Short-chain subfamily. Type I alpha-neurotoxin sub-subfamily. As to expression, expressed by the venom gland.

It localises to the secreted. In terms of biological role, binds to muscle nicotinic acetylcholine receptor (nAChR) and inhibit acetylcholine from binding to the receptor, thereby impairing neuromuscular transmission. The chain is Short neurotoxin OKI-10 from Laticauda laticaudata (Blue-ringed sea krait).